A 190-amino-acid polypeptide reads, in one-letter code: Xanthine phosphoribosyltransferase (190 aa).

Positions 20 and 27 each coordinate xanthine. 128 to 132 contributes to the 5-phospho-alpha-D-ribose 1-diphosphate binding site; sequence ANGKA. K156 lines the xanthine pocket.

It belongs to the purine/pyrimidine phosphoribosyltransferase family. Xpt subfamily. Homodimer.

The protein localises to the cytoplasm. The catalysed reaction is XMP + diphosphate = xanthine + 5-phospho-alpha-D-ribose 1-diphosphate. It participates in purine metabolism; XMP biosynthesis via salvage pathway; XMP from xanthine: step 1/1. Functionally, converts the preformed base xanthine, a product of nucleic acid breakdown, to xanthosine 5'-monophosphate (XMP), so it can be reused for RNA or DNA synthesis. This is Xanthine phosphoribosyltransferase from Finegoldia magna (strain ATCC 29328 / DSM 20472 / WAL 2508) (Peptostreptococcus magnus).